A 387-amino-acid chain; its full sequence is MGSNGADNAHNNAFGGGKNPGIGNTSGAGSNGSASSNRGNSNGWSWSNKPHKNDGFHSDGSYHITFHGDNNSKPKPGGNSGNRGNNGDGASAKVGEITITPDNSKPGRYISSNPEYSLLAKLIDAESIKGTEVYTFHTRKGQYVKVTVPDSNIDKMRVDYVNWKGPKYNNKLVKRFVSQFLLFRKEEKEKNEKEALLKASELVSGMGDKLGEYLGVKYKNVAKEVANDIKNFHGRNIRSYNEAMASLNKVLANPKMKVNKSDKDAIVNAWKQVNAKDMANKIGNLGKAFKVADLAIKVEKIREKSIEGYNTGNWGPLLLEVESWIIGGVVAGVAISLFGAVLSFLPISGLAVTALGVIGIMTISYLSSFIDANRVSNINNIISSVIR.

Positions 1–11 (MGSNGADNAHN) are enriched in polar residues. Residues 1-106 (MGSNGADNAH…ITITPDNSKP (106 aa)) are disordered. Residues 14–30 (FGGGKNPGIGNTSGAGS) show a composition bias toward gly residues. Residues 31-48 (NGSASSNRGNSNGWSWSN) show a composition bias toward low complexity. Gly residues predominate over residues 78–87 (GNSGNRGNNG). Helical transmembrane passes span 325–345 (IIGG…LSFL) and 350–370 (LAVT…SSFI).

The protein belongs to the channel forming colicin family.

Its subcellular location is the cell membrane. Its function is as follows. This colicin is a channel-forming colicin. This class of transmembrane toxins depolarize the cytoplasmic membrane, leading to dissipation of cellular energy. Functionally, colicins are polypeptide toxins produced by and active against E.coli and closely related bacteria. This is Colicin-N (cna) from Escherichia coli.